An 82-amino-acid polypeptide reads, in one-letter code: Immediate early response 3-interacting protein 1 (82 aa).

The next 2 membrane-spanning stretches (helical) occupy residues 2-22 (AFTLYALIQTAILFTNAIAVL) and 62-82 (VMRVPLIAVNSVCIVLLLLFG).

The protein belongs to the YOS1 family.

Its subcellular location is the endoplasmic reticulum membrane. Its function is as follows. Regulator of endoplasmic reticulum secretion that acts as a key determinant of brain size. Required for secretion of extracellular matrix proteins. Required for correct brain development by depositing sufficient extracellular matrix proteins for tissue integrity and the proliferation of neural progenitors. Acts as a regulator of the unfolded protein response (UPR). The chain is Immediate early response 3-interacting protein 1 from Danio rerio (Zebrafish).